Consider the following 428-residue polypeptide: Tyrosine--tRNA ligase (428 aa).

Tyr41 contributes to the L-tyrosine binding site. The short motif at 46–55 (PTADSLHLGH) is the 'HIGH' region element. Tyr179 and Gln183 together coordinate L-tyrosine. The short motif at 239–243 (KFGKT) is the 'KMSKS' region element. Position 242 (Lys242) interacts with ATP. An S4 RNA-binding domain is found at 361–418 (TDLMQALVDAELQPSRGQARKTIASNAVTINGEKQSDPEYIFNDEDRLFGRYTLLRRG).

This sequence belongs to the class-I aminoacyl-tRNA synthetase family. TyrS type 1 subfamily. Homodimer.

It is found in the cytoplasm. It carries out the reaction tRNA(Tyr) + L-tyrosine + ATP = L-tyrosyl-tRNA(Tyr) + AMP + diphosphate + H(+). In terms of biological role, catalyzes the attachment of tyrosine to tRNA(Tyr) in a two-step reaction: tyrosine is first activated by ATP to form Tyr-AMP and then transferred to the acceptor end of tRNA(Tyr). The chain is Tyrosine--tRNA ligase from Salmonella arizonae (strain ATCC BAA-731 / CDC346-86 / RSK2980).